We begin with the raw amino-acid sequence, 232 residues long: Very-long-chain (3R)-3-hydroxyacyl-CoA dehydratase 4 (232 aa).

Topologically, residues 1-19 (MGPLALPAWLQPRYRKNAY) are cytoplasmic. Residues 20–40 (LFIYYLIQFCGHSWIFTNMTV) traverse the membrane as a helical segment. Residues 41 to 56 (RFFSFGKDSMVDTFYA) are Lumenal-facing. The chain crosses the membrane as a helical span at residues 57 to 77 (IGLVMRLCQSVSLLELLHIYV). At 78–112 (GIESNHLLPRFLQLTERIIILFVVITSQEEVQEKY) the chain is on the cytoplasmic side. The chain crosses the membrane as a helical span at residues 113–133 (VVCVLFVFWNLLDMVRYTYSM). The Lumenal portion of the chain corresponds to 134–135 (LS). Residues 136 to 156 (VIGISYAVLTWLSQTLWMPIY) traverse the membrane as a helical segment. Tyr156 is an active-site residue. Position 157 (Pro157) is a topological domain, cytoplasmic. The chain crosses the membrane as a helical span at residues 158-178 (LCVLAEAFAIYQSLPYFESFG). The active site involves Glu163. Residues 179 to 189 (TYSTKLPFDLS) are Lumenal-facing. A helical membrane pass occupies residues 190-210 (IYFPYVLKIYLMMLFIGMYFT). The Cytoplasmic portion of the chain corresponds to 211–232 (YSHLYSERRDILGIFPIKKKKM).

Belongs to the very long-chain fatty acids dehydratase HACD family. May interact with enzymes of the ELO family (including ELOVL1); with those enzymes that mediate condensation, the first of the four steps of the reaction cycle responsible for fatty acids elongation, may be part of a larger fatty acids elongase complex. As to expression, highly expressed in leukocytes, and low expression in heart, spleen, kidney, and placenta.

It is found in the endoplasmic reticulum membrane. It carries out the reaction a very-long-chain (3R)-3-hydroxyacyl-CoA = a very-long-chain (2E)-enoyl-CoA + H2O. The enzyme catalyses (3R)-hydroxyhexadecanoyl-CoA = (2E)-hexadecenoyl-CoA + H2O. It participates in lipid metabolism; fatty acid biosynthesis. Catalyzes the third of the four reactions of the long-chain fatty acids elongation cycle. This endoplasmic reticulum-bound enzymatic process, allows the addition of two carbons to the chain of long- and very long-chain fatty acids/VLCFAs per cycle. This enzyme catalyzes the dehydration of the 3-hydroxyacyl-CoA intermediate into trans-2,3-enoyl-CoA, within each cycle of fatty acid elongation. Thereby, it participates in the production of VLCFAs of different chain lengths that are involved in multiple biological processes as precursors of membrane lipids and lipid mediators. This is Very-long-chain (3R)-3-hydroxyacyl-CoA dehydratase 4 from Homo sapiens (Human).